The following is a 468-amino-acid chain: 3-isopropylmalate dehydratase large subunit (468 aa).

[4Fe-4S] cluster is bound by residues Cys347, Cys407, and Cys410.

The protein belongs to the aconitase/IPM isomerase family. LeuC type 1 subfamily. In terms of assembly, heterodimer of LeuC and LeuD. The cofactor is [4Fe-4S] cluster.

It carries out the reaction (2R,3S)-3-isopropylmalate = (2S)-2-isopropylmalate. The protein operates within amino-acid biosynthesis; L-leucine biosynthesis; L-leucine from 3-methyl-2-oxobutanoate: step 2/4. Catalyzes the isomerization between 2-isopropylmalate and 3-isopropylmalate, via the formation of 2-isopropylmaleate. The protein is 3-isopropylmalate dehydratase large subunit of Synechococcus sp. (strain CC9311).